Reading from the N-terminus, the 67-residue chain is Large ribosomal subunit protein uL29 (67 aa).

It belongs to the universal ribosomal protein uL29 family.

The polypeptide is Large ribosomal subunit protein uL29 (rpmC) (Thermus thermophilus).